The chain runs to 343 residues: Nicotianamine synthase 3 (343 aa).

This sequence belongs to the nicotianamine synthase (NAS)-like family. Expressed in leaves.

It carries out the reaction 3 S-adenosyl-L-methionine = nicotianamine + 3 S-methyl-5'-thioadenosine + 3 H(+). In terms of biological role, synthesizes nicotianamine, a polyamine that is the first intermediate in the synthesis of the phytosiderophores of the mugineic acid type found in gramineae which serve as a sensor for the physiological iron status within the plant, and/or might be involved in the transport of iron. In Oryza sativa subsp. indica (Rice), this protein is Nicotianamine synthase 3 (NAS3).